The sequence spans 773 residues: MIRDLSKMYPQTRHPAPHQPAQPFKFTISESCDRIKEEFQFLQAQYHSLKLECEKLASEKTEMQRHYVMYYEMSYGLNIEMHKQAEIVKRLNAICAQVIPFLSQEHQQQVVQAVERAKQVTMAELNAIIGQQLQAQHLSHGHGLPVPLTPHPSGLQPPAIPPIGSSAGLLALSSALGGQSHLPIKDEKKHHDNDHQRDRDSIKSSSVSPSASFRGSEKHRNSTDYSSESKKQKTEEKEIAARYDSDGEKSDDNLVVDVSNEDPSSPRGSPAHSPRENGLDKTRLLKKDAPISPASVASSSSTPSSKSKELSLNEKSTTPVSKSNTPTPRTDAPTPGSNSTPGLRPVPGKPPGVDPLASSLRTPMAVPCPYPTPFGIVPHAGMNGELTSPGAAYAGLHNISPQMSAAAAAAAAAAAYGRSPVVGFDPHHHMRVPAIPPNLTGIPGGKPAYSFHVSADGQMQPVPFPPDALIGPGIPRHARQINTLNHGEVVCAVTISNPTRHVYTGGKGCVKVWDISHPGNKSPVSQLDCLNRDNYIRSCRLLPDGRTLIVGGEASTLSIWDLAAPTPRIKAELTSSAPACYALAISPDSKVCFSCCSDGNIAVWDLHNQTLVRQFQGHTDGASCIDISNDGTKLWTGGLDNTVRSWDLREGRQLQQHDFTSQIFSLGYCPTGEWLAVGMENSNVEVLHVTKPDKYQLHLHESCVLSLKFAHCGKWFVSTGKDNLLNAWRTPYGASIFQSKESSSVLSCDISVDDKYIVTGSGDKKATVYEVIY.

Disordered regions lie at residues methionine 1–glutamine 22, histidine 140–proline 162, and leucine 182–alanine 357. Positions methionine 1–glutamine 136 are q domain. The segment at histidine 137–serine 204 is GP domain. Positions proline 183 to isoleucine 202 are enriched in basic and acidic residues. Low complexity predominate over residues lysine 203–arginine 214. The interval serine 205–proline 274 is ccN domain. Phosphoserine occurs at positions 208, 212, 216, and 222. Residues glycine 215–aspartate 252 are compositionally biased toward basic and acidic residues. Lysine 237 bears the N6-acetyllysine mark. Residue serine 245 is modified to Phosphoserine. Serine 250 carries the post-translational modification Phosphoserine; by CK2. Serine 265 is subject to Phosphoserine; by CDK1. A phosphoserine mark is found at serine 269 and serine 273. Residues serine 273 to alanine 289 show a composition bias toward basic and acidic residues. Positions arginine 275 to histidine 452 are SP domain. An N6-acetyllysine modification is found at lysine 281. Over residues proline 290–serine 305 the composition is skewed to low complexity. Phosphoserine is present on serine 292. Over residues threonine 317–proline 328 the composition is skewed to polar residues. Threonine 318 carries the post-translational modification Phosphothreonine. Phosphoserine is present on residues serine 321 and serine 323. A phosphothreonine mark is found at threonine 325, threonine 327, threonine 334, and threonine 340. Serine 419 is modified (phosphoserine). 7 WD repeats span residues asparagine 485–proline 523, asparagine 531–lysine 570, serine 575–glutamine 614, glycine 617–glutamine 656, aspartate 658–leucine 697, leucine 699–glutamine 738, and lysine 740–tyrosine 773.

This sequence belongs to the WD repeat Groucho/TLE family. As to quaternary structure, homooligomer and heterooligomer with other family members. Interacts with PAX5. Interacts with LEF1, TCF7, TCF7L1 and TCF7L2. Interacts with ZNF703; TLE4 may mediate ZNF703 transcriptional repression. Interacts with SIX3 and SIX6. Interacts with PAX2. Interacts with TLE1. In terms of processing, phosphorylated. PAX5 binding increases phosphorylation. Ubiquitinated by XIAP/BIRC4. In terms of tissue distribution, expressed in bone marrow-derived macrophages.

The protein resides in the nucleus. Transcriptional corepressor that binds to a number of transcription factors. Inhibits the transcriptional activation mediated by PAX5, and by CTNNB1 and TCF family members in Wnt signaling. The effects of full-length TLE family members may be modulated by association with dominant-negative AES. Essential for the transcriptional repressor activity of SIX3 during retina and lens development and for SIX3 transcriptional auto-repression. Involved in transcriptional repression of GNRHR and enhances MSX1-mediated transcriptional repression of CGA/alpha-GSU. This chain is Transducin-like enhancer protein 4 (Tle4), found in Mus musculus (Mouse).